The primary structure comprises 248 residues: 1-(5-phosphoribosyl)-5-[(5-phosphoribosylamino)methylideneamino] imidazole-4-carboxamide isomerase (248 aa).

The active-site Proton acceptor is D11. D132 functions as the Proton donor in the catalytic mechanism.

It belongs to the HisA/HisF family.

Its subcellular location is the cytoplasm. The enzyme catalyses 1-(5-phospho-beta-D-ribosyl)-5-[(5-phospho-beta-D-ribosylamino)methylideneamino]imidazole-4-carboxamide = 5-[(5-phospho-1-deoxy-D-ribulos-1-ylimino)methylamino]-1-(5-phospho-beta-D-ribosyl)imidazole-4-carboxamide. The protein operates within amino-acid biosynthesis; L-histidine biosynthesis; L-histidine from 5-phospho-alpha-D-ribose 1-diphosphate: step 4/9. The protein is 1-(5-phosphoribosyl)-5-[(5-phosphoribosylamino)methylideneamino] imidazole-4-carboxamide isomerase of Bradyrhizobium diazoefficiens (strain JCM 10833 / BCRC 13528 / IAM 13628 / NBRC 14792 / USDA 110).